A 370-amino-acid polypeptide reads, in one-letter code: Ubiquitin carboxyl-terminal hydrolase 12 (370 aa).

The short motif at 1-4 (MEIL) is the Required for plasma membrane localization of USP12/WDR20 element. Residues 39–369 (FGLVNFGNTC…SGYILFYQSR (331 aa)) form the USP domain. Residue C48 is the Nucleophile of the active site. Residues 146–157 (QEKQNGRLRNGD) are compositionally biased toward basic and acidic residues. A disordered region spans residues 146-168 (QEKQNGRLRNGDVDSEDNNSTPD). Zn(2+)-binding residues include C186, C189, C233, and C236. H317 acts as the Proton acceptor in catalysis.

Belongs to the peptidase C19 family. USP12/USP46 subfamily. Interacts with WDR48. Interacts with WDR20; this interaction promotes translocation of the USP12 complex to the plasma membrane. Component of the USP12-WDR20-WDR48 deubiquitinating complex. Component of the USP12-DMWD-WDR48 deubiquitinating complex. Interacts with PHLPP1. Interacts with RBPJ. Interacts with CBP; this interaction blocks the acetyltransferase activity of CREBBP. Interacts with ITCH; the interaction is more efficient when both USP12 and WDR48/UAF1 are involved and may mediate recruitment of the USP12 deubiquitinating complex to Notch.

It localises to the nucleus. The protein resides in the cytoplasm. It is found in the cell membrane. The catalysed reaction is Thiol-dependent hydrolysis of ester, thioester, amide, peptide and isopeptide bonds formed by the C-terminal Gly of ubiquitin (a 76-residue protein attached to proteins as an intracellular targeting signal).. Activated by interaction with WDR20, WDR48 and DMWD through different allosteric mechanisms. Its function is as follows. Deubiquitinating enzyme that plays various roles in the regulation of the immune response and inflammation. During TCR engagement and activation, translocates into the cytoplasm and deubiquitinates its substrates LAT and TRAT1 and prevents their lysosome-dependent degradation to stabilize the TCR signaling complex at the plasma membrane. Plays an essential role in the selective LPS-induced macrophage response through the activation of NF-kappa-B pathway. In addition, promotes that antiviral immune response through targeting DNA sensor IFI16 to inhibit its proteasome-dependent degradation. Participates in the interferon signaling pathway and antiviral response independently of its deubiquitinase activity by maintaining nuclear phosphorylated STAT1 levels via inhibition of its CREBBP-mediated acetylation and subsequent dephosphorylation. Plays an intrinsic role in promoting the differentiation, activation and proliferation of CD4(+) T-cell by activating the NF-kappa-B signaling pathway through deubiquitinating and stabilizing B-cell lymphoma/leukemia 10/BCL10. In myeloid-derived suppressor cells promotes the activation of the NF-kappa-B via deubiquitination and stabilization of RELA. Regulates the 'Lys-63'-linked polyubiquitin chains of BAX and thereby modulates the mitochondrial apoptotic process. Negative regulator of NOTCH signaling that specifically deubiquitinates non-activated NOTCH receptors to target them for lysosomal degradation; deubiquitination of NOTCH stimulates its transport form late endosomes to lysosomes. Protects neurons against HTT/huntingtin-induced polyglutamine expansion-dependent neurodegeneration through regulation of autophagic flux. This function is independent of deubiquitinase activity or of other components of the USP12-WDR20-WDR48 deubiquitinating complex. In complex with WDR48, acts as a potential tumor suppressor by positively regulating PHLPP1 stability. The sequence is that of Ubiquitin carboxyl-terminal hydrolase 12 from Rattus norvegicus (Rat).